Consider the following 639-residue polypeptide: tRNA uridine 5-carboxymethylaminomethyl modification enzyme MnmG (639 aa).

FAD contacts are provided by residues 13 to 18 (GGGHAG), valine 125, and serine 180. 273–287 (GPRYCPSIEDKVVRF) lines the NAD(+) pocket. Glutamine 370 is an FAD binding site. The segment at 620-639 (KRQGGNGPQSPRPDDGRARA) is disordered.

It belongs to the MnmG family. Homodimer. Heterotetramer of two MnmE and two MnmG subunits. The cofactor is FAD.

The protein resides in the cytoplasm. Functionally, NAD-binding protein involved in the addition of a carboxymethylaminomethyl (cmnm) group at the wobble position (U34) of certain tRNAs, forming tRNA-cmnm(5)s(2)U34. In Thioalkalivibrio sulfidiphilus (strain HL-EbGR7), this protein is tRNA uridine 5-carboxymethylaminomethyl modification enzyme MnmG.